A 567-amino-acid chain; its full sequence is Urease subunit alpha (567 aa).

Positions 134, 136, and 217 each coordinate Ni(2+). Lys-217 carries the N6-carboxylysine modification. His-219 contacts substrate. 2 residues coordinate Ni(2+): His-246 and His-272. His-320 serves as the catalytic Proton donor. Asp-360 contacts Ni(2+).

It belongs to the metallo-dependent hydrolases superfamily. Urease alpha subunit family. As to quaternary structure, heterotrimer of UreA (gamma), UreB (beta) and UreC (alpha) subunits. Three heterotrimers associate to form the active enzyme. It depends on Ni cation as a cofactor. In terms of processing, carboxylation allows a single lysine to coordinate two nickel ions.

The protein localises to the cytoplasm. It catalyses the reaction urea + 2 H2O + H(+) = hydrogencarbonate + 2 NH4(+). Its pathway is nitrogen metabolism; urea degradation; CO(2) and NH(3) from urea (urease route): step 1/1. This is Urease subunit alpha from Pseudomonas putida (strain GB-1).